Here is a 75-residue protein sequence, read N- to C-terminus: MSSGGLLLLLGFLTLWAELTPVSGQDRPKKPGLCPPRPQKPPCVRECKNDWSCPGEQKCCRYGCIFECRDPIFVK.

The first 24 residues, 1–24 (MSSGGLLLLLGFLTLWAELTPVSG), serve as a signal peptide directing secretion. One can recognise a WAP domain in the interval 27–72 (RPKKPGLCPPRPQKPPCVRECKNDWSCPGEQKCCRYGCIFECRDPI). Intrachain disulfides connect cysteine 34–cysteine 60, cysteine 43–cysteine 64, cysteine 47–cysteine 59, and cysteine 53–cysteine 68.

The protein belongs to the venom waprin family. As to expression, expressed by the venom gland.

Its subcellular location is the secreted. Functionally, damages membranes of susceptible bacteria. Has no hemolytic activity. Not toxic to mice. Does not inhibit the proteinases elastase and cathepsin G. The sequence is that of Supwaprin-a from Austrelaps superbus (Lowland copperhead snake).